The chain runs to 201 residues: Holliday junction branch migration complex subunit RuvA (201 aa).

Residues 1 to 64 (MIGRLRGELV…EDAHVLYGFA (64 aa)) are domain I. The domain II stretch occupies residues 65–143 (SESERALFRS…SLPAAVTLTG (79 aa)). The flexible linker stretch occupies residues 144–153 (GKPAAAAARA). The domain III stretch occupies residues 153–201 (APDPVSDAVSALVSLGYKPQEASRLISAVEGEAERSEDLIRLALKATLK).

Belongs to the RuvA family. In terms of assembly, homotetramer. Forms an RuvA(8)-RuvB(12)-Holliday junction (HJ) complex. HJ DNA is sandwiched between 2 RuvA tetramers; dsDNA enters through RuvA and exits via RuvB. An RuvB hexamer assembles on each DNA strand where it exits the tetramer. Each RuvB hexamer is contacted by two RuvA subunits (via domain III) on 2 adjacent RuvB subunits; this complex drives branch migration. In the full resolvosome a probable DNA-RuvA(4)-RuvB(12)-RuvC(2) complex forms which resolves the HJ.

It is found in the cytoplasm. Its function is as follows. The RuvA-RuvB-RuvC complex processes Holliday junction (HJ) DNA during genetic recombination and DNA repair, while the RuvA-RuvB complex plays an important role in the rescue of blocked DNA replication forks via replication fork reversal (RFR). RuvA specifically binds to HJ cruciform DNA, conferring on it an open structure. The RuvB hexamer acts as an ATP-dependent pump, pulling dsDNA into and through the RuvAB complex. HJ branch migration allows RuvC to scan DNA until it finds its consensus sequence, where it cleaves and resolves the cruciform DNA. This is Holliday junction branch migration complex subunit RuvA from Thioalkalivibrio sulfidiphilus (strain HL-EbGR7).